The primary structure comprises 456 residues: tRNA-2-methylthio-N(6)-dimethylallyladenosine synthase (456 aa).

The 118-residue stretch at 9–126 folds into the MTTase N-terminal domain; that stretch reads KKLYIKTHGC…LPEMMETKKS (118 aa). Cysteine 18, cysteine 55, cysteine 89, cysteine 163, cysteine 167, and cysteine 170 together coordinate [4Fe-4S] cluster. The 233-residue stretch at 149–381 folds into the Radical SAM core domain; the sequence is DADGVSAFVS…QDRITQQAMA (233 aa). The region spanning 384 to 448 is the TRAM domain; sequence RRMVGNTERI…PNSLRGSLIA (65 aa).

The protein belongs to the methylthiotransferase family. MiaB subfamily. In terms of assembly, monomer. The cofactor is [4Fe-4S] cluster.

The protein localises to the cytoplasm. The catalysed reaction is N(6)-dimethylallyladenosine(37) in tRNA + (sulfur carrier)-SH + AH2 + 2 S-adenosyl-L-methionine = 2-methylsulfanyl-N(6)-dimethylallyladenosine(37) in tRNA + (sulfur carrier)-H + 5'-deoxyadenosine + L-methionine + A + S-adenosyl-L-homocysteine + 2 H(+). Catalyzes the methylthiolation of N6-(dimethylallyl)adenosine (i(6)A), leading to the formation of 2-methylthio-N6-(dimethylallyl)adenosine (ms(2)i(6)A) at position 37 in tRNAs that read codons beginning with uridine. This chain is tRNA-2-methylthio-N(6)-dimethylallyladenosine synthase, found in Cellvibrio japonicus (strain Ueda107) (Pseudomonas fluorescens subsp. cellulosa).